The sequence spans 377 residues: Erythronate-4-phosphate dehydrogenase (377 aa).

Positions 59 and 81 each coordinate substrate. Asp-162 provides a ligand contact to NAD(+). Arg-237 is a catalytic residue. NAD(+) is bound at residue Asp-260. Glu-265 is an active-site residue. His-282 (proton donor) is an active-site residue. Gly-285 contributes to the NAD(+) binding site. Residue Tyr-286 participates in substrate binding.

This sequence belongs to the D-isomer specific 2-hydroxyacid dehydrogenase family. PdxB subfamily. As to quaternary structure, homodimer.

The protein resides in the cytoplasm. It catalyses the reaction 4-phospho-D-erythronate + NAD(+) = (R)-3-hydroxy-2-oxo-4-phosphooxybutanoate + NADH + H(+). Its pathway is cofactor biosynthesis; pyridoxine 5'-phosphate biosynthesis; pyridoxine 5'-phosphate from D-erythrose 4-phosphate: step 2/5. Catalyzes the oxidation of erythronate-4-phosphate to 3-hydroxy-2-oxo-4-phosphonooxybutanoate. The polypeptide is Erythronate-4-phosphate dehydrogenase (Psychrobacter arcticus (strain DSM 17307 / VKM B-2377 / 273-4)).